The sequence spans 362 residues: 3-dehydroquinate synthase (362 aa).

NAD(+)-binding positions include Asp-72–Lys-77, Gly-106–Asp-110, Thr-130–Thr-131, Lys-143, Lys-152, and Cys-170–Thr-173. 3 residues coordinate Zn(2+): Glu-185, His-248, and His-265.

It belongs to the sugar phosphate cyclases superfamily. Dehydroquinate synthase family. The cofactor is Co(2+). It depends on Zn(2+) as a cofactor. NAD(+) serves as cofactor.

It is found in the cytoplasm. The catalysed reaction is 7-phospho-2-dehydro-3-deoxy-D-arabino-heptonate = 3-dehydroquinate + phosphate. It participates in metabolic intermediate biosynthesis; chorismate biosynthesis; chorismate from D-erythrose 4-phosphate and phosphoenolpyruvate: step 2/7. Its function is as follows. Catalyzes the conversion of 3-deoxy-D-arabino-heptulosonate 7-phosphate (DAHP) to dehydroquinate (DHQ). This chain is 3-dehydroquinate synthase, found in Aliivibrio salmonicida (strain LFI1238) (Vibrio salmonicida (strain LFI1238)).